A 318-amino-acid chain; its full sequence is DNA repair nuclease/redox regulator APEX1 (318 aa).

The tract at residues 1–33 is necessary for interaction with YBX1, binding to RNA, association together with NPM1 to rRNA, endoribonuclease activity on abasic RNA and localization in the nucleoli; the sequence is MPKRGKKGAVAEDGDELKTEPEAKKSKTTAKKN. A disordered region spans residues 1-60; the sequence is MPKRGKKGAVAEDGDELKTEPEAKKSKTTAKKNDKEAAGEGPALYEDPPDQKTSPSGKPA. N6-acetyllysine; by EP300 occurs at positions 6 and 7. Positions 8–13 match the Nuclear localization signal (NLS) motif; it reads GAVAED. Basic and acidic residues predominate over residues 16 to 38; it reads ELKTEPEAKKSKTTAKKNDKEAA. Residues 23–33 are necessary for interaction with NPM1 and for efficient rRNA binding; that stretch reads AKKSKTTAKKN. N6-acetyllysine occurs at positions 27, 31, 32, and 35. At serine 54 the chain carries Phosphoserine. Positions 64–80 match the Nuclear export signal (NES) motif; sequence ICSWNVDGLRAWIKKKG. S-nitrosocysteine; alternate is present on cysteine 65. An intrachain disulfide couples cysteine 65 to cysteine 93. Aspartate 70 is a binding site for Mg(2+). Cysteine 93 carries the post-translational modification S-nitrosocysteine; alternate. Glutamate 96 lines the Mg(2+) pocket. The active site involves tyrosine 171. Position 197 is an N6-acetyllysine (lysine 197). Mg(2+) contacts are provided by aspartate 210 and asparagine 212. Aspartate 210 serves as the catalytic Proton donor/acceptor. A Phosphothreonine; by CDK5 modification is found at threonine 233. Positions 289-318 are mitochondrial targeting sequence (MTS); it reads HSLLTALCDSKIRSKALGSDHCPITLYLAL. Aspartate 308 is a Mg(2+) binding site. Cysteine 310 bears the S-nitrosocysteine mark.

It belongs to the DNA repair enzymes AP/ExoA family. As to quaternary structure, monomer. Homodimer; disulfide-linked. Component of the SET complex, composed of at least APEX1, SET, ANP32A, HMGB2, NME1 and TREX1. Associates with the dimer XRCC5/XRCC6 in a DNA-dependent manner. Interacts with SIRT1; the interaction is increased in the context of genotoxic stress. Interacts with HDAC1, HDAC2 and HDAC3; the interactions are not dependent on the APEX1 acetylation status. Interacts with XRCC1; the interaction is induced by SIRT1 and increased with the APEX1 acetylated form. Interacts with NPM1 (via N-terminal domain); the interaction is RNA-dependent and decreases in hydrogen peroxide-damaged cells. Interacts (via N-terminus) with YBX1 (via C-terminus); the interaction is increased in presence of APEX1 acetylated at Lys-6 and Lys-7. Interacts with HNRNPL; the interaction is DNA-dependent. Interacts (via N-terminus) with KPNA1 and KPNA2. Interacts with TXN; the interaction stimulates the FOS/JUN AP-1 complex DNA-binding activity in a redox-dependent manner. Interacts with GZMA, KRT8, MDM2, POLB, PRDX6, PRPF19, RPLP0, TOMM20 and WDR77. Binds to CDK5. Mg(2+) is required as a cofactor. Mn(2+) serves as cofactor. Phosphorylated. Phosphorylation by kinase PKC or casein kinase CK2 results in enhanced redox activity that stimulates binding of the FOS/JUN AP-1 complex to its cognate binding site. AP-endodeoxyribonuclease activity is not affected by CK2-mediated phosphorylation. Phosphorylation of Thr-233 by CDK5 in response to MPP(+)/MPTP (1-methyl-4-phenylpyridinium) reduces AP-endodeoxyribonuclease activity resulting in accumulation of DNA damage and contributing to neuronal death. Post-translationally, acetylated on Lys-6 and Lys-7. Acetylation is increased by the transcriptional coactivator EP300 acetyltransferase, genotoxic agents like H(2)O(2) and methyl methanesulfonate (MMS). Acetylation increases its binding affinity to the negative calcium response element (nCaRE) DNA promoter. The acetylated form induces a stronger binding of YBX1 to the Y-box sequence in the MDR1 promoter than the unacetylated form. Deacetylated on lysines. Lys-6 and Lys-7 are deacetylated by SIRT1. In terms of processing, cleaved at Lys-31 by granzyme A to create the mitochondrial form; leading in reduction of binding to DNA, AP endodeoxyribonuclease activity, redox activation of transcription factors and to enhanced cell death. Cleaved by granzyme K; leading to intracellular ROS accumulation and enhanced cell death after oxidative stress. Cys-69 and Cys-93 are nitrosylated in response to nitric oxide (NO) and lead to the exposure of the nuclear export signal (NES). Post-translationally, ubiquitinated by MDM2; leading to translocation to the cytoplasm and proteasomal degradation.

It is found in the nucleus. The protein resides in the nucleolus. The protein localises to the nucleus speckle. It localises to the endoplasmic reticulum. Its subcellular location is the cytoplasm. It is found in the mitochondrion. It catalyses the reaction a deoxyribonucleotide-2'-deoxyribose-5'-monophosphate-DNA + H2O = a 5'-end 2'-deoxyribose-5'-monophosphate-DNA + a 3'-end 2'-deoxyribonucleotide-DNA + H(+). The catalysed reaction is Exonucleolytic cleavage in the 3'- to 5'-direction to yield nucleoside 5'-phosphates.. The enzyme catalyses a 3'-end 2'-deoxyribonucleotide-3'-phosphoglycolate-DNA + H2O = 2-phosphoglycolate + a 3'-end 2'-deoxyribonucleotide-DNA + H(+). It carries out the reaction a 3'-end 2'-deoxyribonucleotide-8-oxoguanine-DNA + H2O = 8-oxo-dGMP + a 3'-end 2'-deoxyribonucleotide-DNA + H(+). NPM1 stimulates endodeoxyribonuclease activity on double-stranded DNA with AP sites, but inhibits endoribonuclease activity on single-stranded RNA containing AP sites. Its function is as follows. Multifunctional protein that plays a central role in the cellular response to oxidative stress. The two major activities of APEX1 are DNA repair and redox regulation of transcriptional factors. Functions as an apurinic/apyrimidinic (AP) endodeoxyribonuclease in the base excision repair (BER) pathway of DNA lesions induced by oxidative and alkylating agents. Initiates repair of AP sites in DNA by catalyzing hydrolytic incision of the phosphodiester backbone immediately adjacent to the damage, generating a single-strand break with 5'-deoxyribose phosphate and 3'-hydroxyl ends. Also incises at AP sites in the DNA strand of DNA/RNA hybrids, single-stranded DNA regions of R-loop structures, and single-stranded RNA molecules. Operates at switch sites of immunoglobulin (Ig) constant regions where it mediates Ig isotype class switch recombination. Processes AP sites induced by successive action of AICDA and UNG. Generates staggered nicks in opposite DNA strands resulting in the formation of double-strand DNA breaks that are finally resolved via non-homologous end joining repair pathway. Has 3'-5' exodeoxyribonuclease activity on mismatched deoxyribonucleotides at the 3' termini of nicked or gapped DNA molecules during short-patch BER. Possesses DNA 3' phosphodiesterase activity capable of removing lesions (such as phosphoglycolate and 8-oxoguanine) blocking the 3' side of DNA strand breaks. Also acts as an endoribonuclease involved in the control of single-stranded RNA metabolism. Plays a role in regulating MYC mRNA turnover by preferentially cleaving in between UA and CA dinucleotides of the MYC coding region determinant (CRD). In association with NMD1, plays a role in the rRNA quality control process during cell cycle progression. Acts as a loading factor for POLB onto non-incised AP sites in DNA and stimulates the 5'-terminal deoxyribose 5'-phosphate (dRp) excision activity of POLB. Exerts reversible nuclear redox activity to regulate DNA binding affinity and transcriptional activity of transcriptional factors by controlling the redox status of their DNA-binding domain, such as the FOS/JUN AP-1 complex after exposure to IR. Involved in calcium-dependent down-regulation of parathyroid hormone (PTH) expression by binding to negative calcium response elements (nCaREs). Together with HNRNPL or the dimer XRCC5/XRCC6, associates with nCaRE, acting as an activator of transcriptional repression. May also play a role in the epigenetic regulation of gene expression by participating in DNA demethylation. Stimulates the YBX1-mediated MDR1 promoter activity, when acetylated at Lys-6 and Lys-7, leading to drug resistance. Plays a role in protection from granzyme-mediated cellular repair leading to cell death. Binds DNA and RNA. Associates, together with YBX1, on the MDR1 promoter. Together with NPM1, associates with rRNA. The chain is DNA repair nuclease/redox regulator APEX1 (APEX1) from Pongo pygmaeus (Bornean orangutan).